The primary structure comprises 452 residues: CCA-adding enzyme (452 aa).

ATP is bound by residues serine 54 and arginine 57. Residues serine 54 and arginine 57 each coordinate CTP. Residues aspartate 66, aspartate 68, and aspartate 117 each contribute to the Mg(2+) site. ATP is bound by residues histidine 140, lysine 160, and tyrosine 169. Positions 140, 160, and 169 each coordinate CTP.

It belongs to the tRNA nucleotidyltransferase/poly(A) polymerase family. Archaeal CCA-adding enzyme subfamily. As to quaternary structure, homodimer. Mg(2+) serves as cofactor.

It carries out the reaction a tRNA precursor + 2 CTP + ATP = a tRNA with a 3' CCA end + 3 diphosphate. The catalysed reaction is a tRNA with a 3' CCA end + 2 CTP + ATP = a tRNA with a 3' CCACCA end + 3 diphosphate. Catalyzes the addition and repair of the essential 3'-terminal CCA sequence in tRNAs without using a nucleic acid template. Adds these three nucleotides in the order of C, C, and A to the tRNA nucleotide-73, using CTP and ATP as substrates and producing inorganic pyrophosphate. tRNA 3'-terminal CCA addition is required both for tRNA processing and repair. Also involved in tRNA surveillance by mediating tandem CCA addition to generate a CCACCA at the 3' terminus of unstable tRNAs. While stable tRNAs receive only 3'-terminal CCA, unstable tRNAs are marked with CCACCA and rapidly degraded. The polypeptide is CCA-adding enzyme (Halobacterium salinarum (strain ATCC 29341 / DSM 671 / R1)).